A 277-amino-acid polypeptide reads, in one-letter code: MSSDRPVALVTGANKGIGFAIVRDLCRKFLGDVVLTARDESRGHEAVKQLQTEGLSPRFHQLDIDNPQSIRALRDFLLQEYGGLNVLVNNAGIAFKVVDPTPFHIQAEVTMKTNFFGTQDVCKELLPIIKPQGRVVNVSSSVSLRALKSCSPELQQKFRSETITEEELVGLMNKFIEDAKKGVHAKEGWPNSAYGVTKIGVTVLSRIYARKLNEERREDKILLNACCPGWVRTDMAGPKATKSPEEGAETPVYLALLPPGAEGPHGQFVQDKKVEPW.

Serine 2 bears the N-acetylserine mark. The residue at position 2 (serine 2) is a Phosphoserine. NADP(+) contacts are provided by residues 10-34, 63-64, and asparagine 90; these read VTGA…GDVV and DI. Residues 95 to 97 and glutamine 106 contribute to the glutathione site; that span reads FKV. Position 140 (serine 140) interacts with substrate. 193–194 contributes to the glutathione binding site; the sequence is AY. Tyrosine 194 (proton acceptor) is an active-site residue. NADP(+) is bound by residues 194 to 198 and 231 to 233; these read YGVTK and VRT. At lysine 239 the chain carries N6-1-carboxyethyl lysine. The disordered stretch occupies residues 258-277; it reads PPGAEGPHGQFVQDKKVEPW.

The protein belongs to the short-chain dehydrogenases/reductases (SDR) family. In terms of assembly, monomer.

It is found in the cytoplasm. It carries out the reaction a secondary alcohol + NADP(+) = a ketone + NADPH + H(+). The enzyme catalyses prostaglandin F2alpha + NADP(+) = prostaglandin E2 + NADPH + H(+). It catalyses the reaction prostaglandin E1 + NADP(+) = 15-oxoprostaglandin E1 + NADPH + H(+). The catalysed reaction is menadione + NADPH + H(+) = menadiol + NADP(+). It carries out the reaction prostaglandin D2 + NADP(+) = 15-oxoprostaglandin D2 + NADPH + H(+). The enzyme catalyses prostaglandin E2 + NADP(+) = 15-oxoprostaglandin E2 + NADPH + H(+). It catalyses the reaction prostaglandin F2alpha + NADP(+) = 15-oxoprostaglandin F2alpha + NADPH + H(+). The catalysed reaction is daunorubicin + NADPH + H(+) = 13-dihydrodaunorubicin + NADP(+). It carries out the reaction S-nitrosoglutathione + NADPH + H(+) = S-(hydroxysulfenamide)glutathione + NADP(+). The enzyme catalyses a primary alcohol + NADP(+) = an aldehyde + NADPH + H(+). It catalyses the reaction cortisol + NADPH + H(+) = 20beta-dihydrocortisol + NADP(+). The catalysed reaction is corticosterone + NADPH + H(+) = 20beta-dihydrocorticosterone + NADP(+). In terms of biological role, NADPH-dependent reductase with broad substrate specificity. Catalyzes the reduction of a wide variety of carbonyl compounds including quinones, prostaglandins, menadione, plus various xenobiotics. Catalyzes the reduction of the antitumor anthracyclines doxorubicin and daunorubicin to the cardiotoxic compounds doxorubicinol and daunorubicinol. Can convert prostaglandin E to prostaglandin F2-alpha. Can bind glutathione, which explains its higher affinity for glutathione-conjugated substrates. Catalyzes the reduction of S-nitrosoglutathione. In addition, participates in the glucocorticoid metabolism by catalyzing the NADPH-dependent cortisol/corticosterone into 20beta-dihydrocortisol (20b-DHF) or 20beta-corticosterone (20b-DHB), which are weak agonists of NR3C1 and NR3C2 in adipose tissue. The chain is Carbonyl reductase [NADPH] 1 from Rattus norvegicus (Rat).